The following is a 155-amino-acid chain: Archaemetzincin (155 aa).

His109 is a binding site for Zn(2+). Glu110 acts as the Proton acceptor in catalysis. His113, His119, Cys120, Cys125, Cys144, and Cys147 together coordinate Zn(2+).

It belongs to the peptidase M54 family. Monomer. The cofactor is Zn(2+).

Its function is as follows. Probable zinc metalloprotease whose natural substrate is unknown. In Pyrobaculum aerophilum (strain ATCC 51768 / DSM 7523 / JCM 9630 / CIP 104966 / NBRC 100827 / IM2), this protein is Archaemetzincin.